Here is a 101-residue protein sequence, read N- to C-terminus: Urease subunit gamma (101 aa).

The protein belongs to the urease gamma subunit family. In terms of assembly, heterotrimer of UreA (gamma), UreB (beta) and UreC (alpha) subunits. Three heterotrimers associate to form the active enzyme.

Its subcellular location is the cytoplasm. It carries out the reaction urea + 2 H2O + H(+) = hydrogencarbonate + 2 NH4(+). The protein operates within nitrogen metabolism; urea degradation; CO(2) and NH(3) from urea (urease route): step 1/1. The polypeptide is Urease subunit gamma (Ureaplasma urealyticum serovar 10 (strain ATCC 33699 / Western)).